The following is a 63-amino-acid chain: UPF0370 protein ECA1289 (63 aa).

A helical membrane pass occupies residues 3–23; that stretch reads WLADYWWIILIILIGMLINGI. Positions 39–63 are disordered; that stretch reads PKLPPHRDNNDKWDNEEDDWPKKKP.

It belongs to the UPF0370 family.

The protein resides in the cell membrane. The sequence is that of UPF0370 protein ECA1289 from Pectobacterium atrosepticum (strain SCRI 1043 / ATCC BAA-672) (Erwinia carotovora subsp. atroseptica).